The sequence spans 355 residues: Mu-like prophage FluMu protein gp47 (355 aa).

Belongs to the Mu gp47/PBSX XkdT family.

The polypeptide is Mu-like prophage FluMu protein gp47 (Haemophilus influenzae (strain ATCC 51907 / DSM 11121 / KW20 / Rd)).